The sequence spans 131 residues: UPF0102 protein YraN (131 aa).

Polar residues predominate over residues Met-1 to Thr-19. The interval Met-1–Gly-20 is disordered.

Belongs to the UPF0102 family.

This chain is UPF0102 protein YraN, found in Escherichia coli O8 (strain IAI1).